The primary structure comprises 302 residues: Sulfate adenylyltransferase subunit 2 (302 aa).

The protein belongs to the PAPS reductase family. CysD subfamily. As to quaternary structure, heterodimer composed of CysD, the smaller subunit, and CysN.

It carries out the reaction sulfate + ATP + H(+) = adenosine 5'-phosphosulfate + diphosphate. It participates in sulfur metabolism; hydrogen sulfide biosynthesis; sulfite from sulfate: step 1/3. With CysN forms the ATP sulfurylase (ATPS) that catalyzes the adenylation of sulfate producing adenosine 5'-phosphosulfate (APS) and diphosphate, the first enzymatic step in sulfur assimilation pathway. APS synthesis involves the formation of a high-energy phosphoric-sulfuric acid anhydride bond driven by GTP hydrolysis by CysN coupled to ATP hydrolysis by CysD. The polypeptide is Sulfate adenylyltransferase subunit 2 (Parabacteroides distasonis (strain ATCC 8503 / DSM 20701 / CIP 104284 / JCM 5825 / NCTC 11152)).